The primary structure comprises 327 residues: Malate dehydrogenase (327 aa).

12–18 (GAAGQIG) is a binding site for NAD(+). Substrate-binding residues include R93 and R99. NAD(+) contacts are provided by residues N106, Q113, and 130-132 (VGN). Residues N132 and R163 each coordinate substrate. The active-site Proton acceptor is H188.

This sequence belongs to the LDH/MDH superfamily. MDH type 2 family.

The catalysed reaction is (S)-malate + NAD(+) = oxaloacetate + NADH + H(+). Catalyzes the reversible oxidation of malate to oxaloacetate. In Paraburkholderia phymatum (strain DSM 17167 / CIP 108236 / LMG 21445 / STM815) (Burkholderia phymatum), this protein is Malate dehydrogenase.